The following is a 2871-amino-acid chain: MRRGGLLEVALGFTVLLASYTSHGADTNLEAGNVKETRANRAKRRGGGGHDALKGPNVCGSRYNAYCCPGWKTLPGGNQCIVPICRHSCGDGFCSRPNMCTCPSGQIAPSCGSRSIQHCNIRCMNGGSCSDDHCLCQKGYIGTHCGQPVCESGCLNGGRCVAPNRCACTYGFTGPQCERDYRTGPCFTVISNQMCQGQLSGIVCTKTLCCATVGRAWGHPCEMCPAQPHPCRRGFIPNIRTGACQDVDECQAIPGLCQGGNCINTVGSFECKCPAGHKFNEVSQKCEDIDECSTIPGICDGGECTNTVSSYFCKCPPGFYTSPDGTRCIDVRPGYCYTALANGRCSNQLPQSITKMQCCCDVGRCWSPGVTVAPEMCPIRATEDFNKLCSVPMVIPERPGYPPPPLGPVPPVQPVPPGFPPGPQIMIPRPPVEYPYPSREPPRVLPVNVTDYCQLFRYLCQNGRCIPTPGSYRCECNKGFQLDLRGECIDVDECEKNPCAGGECINTQGSYTCQCRPGYQSTLTRTECRDIDECLQNGRICNNGRCINTDGSFHCVCNAGFHVTRDGKNCEDMDECSIRNMCLNGMCINEDGSFKCICKPGFQLASDGRYCKDINECETPGICMNGRCVNTDGSYRCECFPGLAVGLDGRVCVDTHMRSTCYGGYKRGQCVKPLFGAVTKSECCCASTEYAFGEPCQPCPSQNSAEYQALCSSGPGITSAGSDINECALDPDICPNGICENLRGTYKCICNSGYEVDSTGKNCVDINECVLNSLLCDNGQCRNTPGSFVCTCPKGFIYKPELKTCEDIDECESSPCINGVCKNSPGSFICECSSESTLDPTKTICIETIKGTCWQTVIDGRCEININGATLKSQCCSSLGAAWGSPCTPCQVDPICGKGYSRIKGTQCEDIDECEVFPGVCKNGLCVNSKGSFKCQCPSGMTLDATGRICLDIRLETCFLRYEDEECTLPVAGRHRMDACCCSVGAAWGTEECEECPVRNTPEYEELCPRGPGFATKEITNGKRFFKDINECKMIPNLCTHGKCRNTIGSFKCRCDSGFALDSEERNCTDIDECRISPDLCGRGQCVNTPGDFECKCDEGYESGFMMMKNCMDIDECQRDPLLCRGGVCLNTEGSYRCECPPGHQLAPNISACIDINECELSAHLCPHGRCVNLIGKYQCACNPGYHSTPDRLFCVDIDECSIMNGGCETFCTNSEGSYECSCQPGFALMPDQRSCTDIDECEDNPNICDGGQCTNIPGEYRCLCYDGFMASEDMKTCVDVNECDLNPNICLSGTCENTKGSFICHCDMGYSGKKGKTGCTDINECEIGAHNCDRHAVCTNTAGSFKCSCSPGWIGDGIKCTDLDECSNGTHMCSQHADCKNTMGSYRCLCKEGYTGDGFTCTDLDECSENLNLCGNGQCLNAPGGYRCECDMGFVPSADGKACEDIDECSLPNICVFGTCHNLPGLFRCECEIGYELDRSGGNCTDVNECLDPTTCISGNCVNTPGSYTCDCPPDFELNPTRVGCVDTRSGNCYLDIRPRGDNGDTACSNEIGVGVSKASCCCSLGKAWGTPCELCPPVNTSEYKILCPGGEGFRPNPITVILEDIDECQELPGLCQGGKCINTFGSFQCRCPTGYYLNEDTRVCDDVNECETPGICGPGTCYNTVGNYTCICPPDYMQVNGGNNCMDMRRSLCYRNYYADNQTCDGELLFNMTKKMCCCSYNIGRAWNKPCEQCPIPSTDEFATLCGSQRPGFVIDIYTGLPVDIDECREIPGVCENGVCINMVGSFRCECPVGFFYNDKLLVCEDIDECQNGPVCQRNAECINTAGSYRCDCKPGYRFTSTGQCNDRNECQEIPNICSHGQCIDTVGSFYCLCHTGFKTNADQTMCLDINECERDACGNGTCRNTIGSFNCRCNHGFILSHNNDCIDVDECATGNGNLCRNGQCINTVGSFQCQCNEGYEVAPDGRTCVDINECLLDPRKCAPGTCQNLDGSYRCICPPGYSLQNDKCEDIDECVEEPEICALGTCSNTEGSFKCLCPDGFSLSSTGRRCQDLRMSYCYAKFEGGKCSSPKSRNHSKQECCCALKGEGWGDPCELCPTEPDEAFRQICPYGSGIIVGPDDSAVDMDECKEPDVCKHGQCINTDGSYRCECPFGYILQGNECVDTDECSVGNPCGNGTCKNVIGGFECTCEEGFEPGPMMTCEDINECAQNPLLCAFRCVNTYGSYECKCPAGYVLREDRRMCKDEDECEEGKHDCAEKQMECKNLIGTYLCICGPGYQRRPDGEGCVDENECQTKPGICENGRCLNTRGSYTCECNDGFTASPNQDECLDNREGYCFTEVLQNMCQIGSSNRNPVTKSECCCDGGRGWGPHCEICPFQGTVAFKKLCPHGRGFMTNGADIDECKVIHDVCRNGECVNDRGSYHCICKTGYTPDITGTACVDLNECNQAPKPCNFICKNTEGSYQCSCPKGYILQEDGRSCKDLDECATKQHNCQFLCVNTIGSFTCKCPPGFTQHHTACIDNNECTSDINLCGSKGICQNTPGSFTCECQRGFSLDPSGASCEDVDECEGNHRCQHGCQNIIGGYRCSCPQGYLQHYQWNQCVDENECLSAHICGGASCHNTLGSYKCMCPAGFQYEQFSGGCQDINECGSAQAPCSYGCSNTEGGYLCACPPGYFRIGQGHCVSGMGMGRGNPEPPASGEMDDNSLSPEACYECKINGYPKRGRKRRSANETDASNIEDQPEIEANVSLASWDVEKTAVFAFNISHISNKVRILELLPALTTLTNHNRYLIESGNENGFFKINQKEGISYLHFTKKKPVAGTYSLQISSTPLYKKKELNQLEDKYDKDYLSGELGDNLKMKIQILLH.

The signal sequence occupies residues methionine 1 to glycine 24. A propeptide spanning residues alanine 25 to arginine 44 is cleaved from the precursor. Residues arginine 45–isoleucine 81 form a fibrillin unique N-terminal (FUN) domain region. The segment at arginine 45 to threonine 450 is N-terminal domain. Intrachain disulfides connect cysteine 59–cysteine 68, cysteine 67–cysteine 80, cysteine 85–cysteine 94, cysteine 89–cysteine 100, cysteine 102–cysteine 111, cysteine 119–cysteine 129, cysteine 123–cysteine 134, cysteine 136–cysteine 145, cysteine 150–cysteine 160, cysteine 154–cysteine 166, and cysteine 168–cysteine 177. EGF-like domains are found at residues isoleucine 81 to glycine 112, serine 115 to glycine 146, and glutamine 147 to glutamate 178. The interval cysteine 119–isoleucine 329 is interaction with MFAP4. In terms of domain architecture, TB 1 spans glycine 184 to isoleucine 236. Residues cysteine 195–cysteine 221 are hybrid domain 1. The EGF-like 4; calcium-binding domain maps to aspartate 246–glutamate 287. 6 disulfides stabilise this stretch: cysteine 250–cysteine 262, cysteine 257–cysteine 271, cysteine 273–cysteine 286, cysteine 292–cysteine 304, cysteine 299–cysteine 313, and cysteine 315–cysteine 328. Serine 268 carries O-linked (Glc) serine glycosylation. One can recognise an EGF-like 5; calcium-binding domain in the interval aspartate 288–isoleucine 329. One can recognise a TB 2 domain in the interval glycine 334–cysteine 389. Asparagine 448 carries N-linked (GlcNAc...) asparagine glycosylation. The EGF-like 6 domain maps to valine 449–isoleucine 489. Intrachain disulfides connect cysteine 453–cysteine 465, cysteine 460–cysteine 474, cysteine 476–cysteine 488, cysteine 494–cysteine 504, cysteine 499–cysteine 513, cysteine 515–cysteine 528, cysteine 534–cysteine 546, cysteine 541–cysteine 555, cysteine 557–cysteine 570, cysteine 576–cysteine 587, cysteine 582–cysteine 596, cysteine 598–cysteine 611, cysteine 617–cysteine 628, cysteine 623–cysteine 637, and cysteine 639–cysteine 652. O-linked (Glc) serine glycosylation is present at serine 471. In terms of domain architecture, EGF-like 7; calcium-binding spans aspartate 490 to arginine 529. The O-linked (Glc) serine glycan is linked to serine 510. The 42-residue stretch at aspartate 530–glutamate 571 folds into the EGF-like 8; calcium-binding domain. The 41-residue stretch at aspartate 572 to lysine 612 folds into the EGF-like 9; calcium-binding domain. An EGF-like 10; calcium-binding domain is found at aspartate 613–valine 653. Residues serine 659 to cysteine 711 enclose the TB 3 domain. An EGF-like 11; calcium-binding domain is found at aspartate 723–valine 764. Cystine bridges form between cysteine 727–cysteine 739, cysteine 734–cysteine 748, cysteine 750–cysteine 763, cysteine 769–cysteine 781, cysteine 776–cysteine 790, cysteine 792–cysteine 805, cysteine 811–cysteine 821, cysteine 816–cysteine 830, cysteine 832–cysteine 845, cysteine 853–cysteine 875, cysteine 862–cysteine 887, cysteine 876–cysteine 890, cysteine 896–cysteine 908, cysteine 914–cysteine 926, cysteine 921–cysteine 935, and cysteine 937–cysteine 950. One can recognise an EGF-like 12; calcium-binding domain in the interval aspartate 765–glutamate 806. The region spanning aspartate 807–isoleucine 846 is the EGF-like 13; calcium-binding domain. The TB 4 domain occupies glycine 851 to arginine 902. Positions cysteine 862–cysteine 887 are hybrid domain 2. Residues aspartate 910–leucine 951 enclose the EGF-like 14; calcium-binding domain. In terms of domain architecture, TB 5 spans glutamate 956–cysteine 1008. The EGF-like 15; calcium-binding domain occupies aspartate 1028–threonine 1069. 46 disulfide bridges follow: cysteine 1032–cysteine 1044, cysteine 1039–cysteine 1053, cysteine 1055–cysteine 1068, cysteine 1074–cysteine 1086, cysteine 1081–cysteine 1095, cysteine 1097–cysteine 1111, cysteine 1117–cysteine 1129, cysteine 1124–cysteine 1138, cysteine 1140–cysteine 1153, cysteine 1159–cysteine 1171, cysteine 1166–cysteine 1180, cysteine 1182–cysteine 1195, cysteine 1201–cysteine 1212, cysteine 1208–cysteine 1221, cysteine 1223–cysteine 1236, cysteine 1242–cysteine 1254, cysteine 1249–cysteine 1263, cysteine 1265–cysteine 1278, cysteine 1284–cysteine 1296, cysteine 1291–cysteine 1305, cysteine 1307–cysteine 1320, cysteine 1326–cysteine 1339, cysteine 1333–cysteine 1348, cysteine 1350–cysteine 1361, cysteine 1367–cysteine 1380, cysteine 1374–cysteine 1389, cysteine 1391–cysteine 1402, cysteine 1408–cysteine 1420, cysteine 1415–cysteine 1429, cysteine 1431–cysteine 1444, cysteine 1450–cysteine 1461, cysteine 1456–cysteine 1470, cysteine 1472–cysteine 1485, cysteine 1491–cysteine 1502, cysteine 1497–cysteine 1511, cysteine 1513–cysteine 1526, cysteine 1534–cysteine 1562, cysteine 1549–cysteine 1574, cysteine 1563–cysteine 1577, cysteine 1564–cysteine 1589, cysteine 1610–cysteine 1622, cysteine 1617–cysteine 1631, cysteine 1633–cysteine 1646, cysteine 1652–cysteine 1663, cysteine 1658–cysteine 1672, and cysteine 1674–cysteine 1687. N-linked (GlcNAc...) asparagine glycosylation is present at asparagine 1067. Residues aspartate 1070–methionine 1112 enclose the EGF-like 16; calcium-binding domain. Positions aspartate 1113–isoleucine 1154 constitute an EGF-like 17; calcium-binding domain. The O-linked (Glc) serine glycan is linked to serine 1135. An N-linked (GlcNAc...) asparagine glycan is attached at asparagine 1149. One can recognise an EGF-like 18; calcium-binding domain in the interval aspartate 1155 to valine 1196. The 41-residue stretch at aspartate 1197–threonine 1237 folds into the EGF-like 19; calcium-binding domain. Serine 1218 carries an O-linked (Glc) serine glycan. In terms of domain architecture, EGF-like 20; calcium-binding spans aspartate 1238 to valine 1279. Residues aspartate 1280 to threonine 1321 form the EGF-like 21; calcium-binding domain. Serine 1302 carries an O-linked (Glc) serine glycan. In terms of domain architecture, EGF-like 22; calcium-binding spans aspartate 1322 to threonine 1362. Residue serine 1345 is glycosylated (O-linked (Glc) serine). Residues aspartate 1363 to threonine 1403 enclose the EGF-like 23; calcium-binding domain. N-linked (GlcNAc...) asparagine glycosylation occurs at asparagine 1369. O-linked (Glc) serine glycosylation occurs at serine 1386. Residues aspartate 1404–glutamate 1445 form the EGF-like 24; calcium-binding domain. The 41-residue stretch at aspartate 1446–threonine 1486 folds into the EGF-like 25; calcium-binding domain. N-linked (GlcNAc...) asparagine glycosylation occurs at asparagine 1484. The EGF-like 26; calcium-binding domain occupies aspartate 1487–valine 1527. O-linked (Glc) serine glycosylation is present at serine 1508. A C-terminal domain region spans residues aspartate 1528–arginine 2731. Residues glycine 1532–cysteine 1589 form the TB 6 domain. A Cell attachment site motif is present at residues arginine 1541–aspartate 1543. Asparagine 1581 carries N-linked (GlcNAc...) asparagine glycosylation. Residues aspartate 1606–aspartate 1647 form the EGF-like 27; calcium-binding domain. O-linked (Glc) serine glycosylation occurs at serine 1628. Residues aspartate 1648–methionine 1688 enclose the EGF-like 28; calcium-binding domain. N-linked (GlcNAc...) asparagine glycosylation is present at asparagine 1669. The TB 7 domain maps to serine 1693–cysteine 1748. Residues asparagine 1703 and asparagine 1713 are each glycosylated (N-linked (GlcNAc...) asparagine). Residues aspartate 1766 to glutamate 1807 enclose the EGF-like 29; calcium-binding domain. Intrachain disulfides connect cysteine 1770-cysteine 1782, cysteine 1777-cysteine 1791, cysteine 1793-cysteine 1806, cysteine 1812-cysteine 1824, cysteine 1818-cysteine 1833, cysteine 1835-cysteine 1847, cysteine 1853-cysteine 1865, cysteine 1860-cysteine 1874, cysteine 1876-cysteine 1889, cysteine 1895-cysteine 1905, cysteine 1900-cysteine 1914, cysteine 1916-cysteine 1928, cysteine 1934-cysteine 1947, cysteine 1942-cysteine 1956, cysteine 1958-cysteine 1971, cysteine 1977-cysteine 1989, cysteine 1984-cysteine 1998, cysteine 2000-cysteine 2011, cysteine 2017-cysteine 2029, cysteine 2024-cysteine 2038, cysteine 2040-cysteine 2053, cysteine 2061-cysteine 2083, cysteine 2070-cysteine 2096, cysteine 2084-cysteine 2099, cysteine 2085-cysteine 2111, cysteine 2131-cysteine 2142, cysteine 2137-cysteine 2151, cysteine 2153-cysteine 2164, cysteine 2170-cysteine 2181, cysteine 2176-cysteine 2190, cysteine 2192-cysteine 2204, cysteine 2210-cysteine 2221, cysteine 2217-cysteine 2230, cysteine 2232-cysteine 2245, cysteine 2251-cysteine 2265, cysteine 2258-cysteine 2274, cysteine 2276-cysteine 2289, cysteine 2295-cysteine 2307, cysteine 2302-cysteine 2316, and cysteine 2318-cysteine 2331. In terms of domain architecture, EGF-like 30; calcium-binding spans aspartate 1808 to asparagine 1848. O-linked (Glc) serine glycosylation occurs at serine 1830. Positions aspartate 1849 to leucine 1890 constitute an EGF-like 31; calcium-binding domain. An O-linked (Glc) serine glycan is attached at serine 1871. Residues aspartate 1891–isoleucine 1929 form the EGF-like 32; calcium-binding domain. Asparagine 1902 carries N-linked (GlcNAc...) asparagine glycosylation. Serine 1911 carries an O-linked (Glc) serine glycan. Positions aspartate 1930 to valine 1972 constitute an EGF-like 33; calcium-binding domain. An O-linked (Glc) serine glycan is attached at serine 1953. Positions aspartate 1973–glutamate 2012 constitute an EGF-like 34; calcium-binding domain. The EGF-like 35; calcium-binding domain maps to aspartate 2013–glutamine 2054. Residue serine 2035 is glycosylated (O-linked (Glc) serine). In terms of domain architecture, TB 8 spans serine 2059 to cysteine 2111. A glycan (N-linked (GlcNAc...) asparagine) is linked at asparagine 2077. Positions aspartate 2127–valine 2165 constitute an EGF-like 36; calcium-binding domain. O-linked (Glc) serine glycosylation occurs at serine 2148. The 40-residue stretch at aspartate 2166–glutamate 2205 folds into the EGF-like 37; calcium-binding domain. Asparagine 2178 is a glycosylation site (N-linked (GlcNAc...) asparagine). An EGF-like 38; calcium-binding domain is found at aspartate 2206–lysine 2246. Serine 2227 is a glycosylation site (O-linked (Glc) serine). The region spanning aspartate 2247–valine 2290 is the EGF-like 39; calcium-binding domain. Residues aspartate 2291–leucine 2332 form the EGF-like 40; calcium-binding domain. Serine 2313 carries an O-linked (Glc) serine glycan. In terms of domain architecture, TB 9 spans glycine 2337–cysteine 2390. The EGF-like 41; calcium-binding domain maps to aspartate 2402–valine 2443. Cystine bridges form between cysteine 2406-cysteine 2418, cysteine 2413-cysteine 2427, cysteine 2429-cysteine 2442, cysteine 2448-cysteine 2459, cysteine 2455-cysteine 2468, cysteine 2470-cysteine 2483, cysteine 2489-cysteine 2500, cysteine 2496-cysteine 2509, cysteine 2511-cysteine 2522, cysteine 2528-cysteine 2541, cysteine 2535-cysteine 2550, cysteine 2552-cysteine 2565, cysteine 2571-cysteine 2581, cysteine 2577-cysteine 2590, cysteine 2592-cysteine 2605, cysteine 2611-cysteine 2622, cysteine 2617-cysteine 2631, cysteine 2633-cysteine 2646, cysteine 2652-cysteine 2663, cysteine 2659-cysteine 2672, and cysteine 2674-cysteine 2686. In terms of domain architecture, EGF-like 42; calcium-binding spans aspartate 2444–lysine 2484. An O-linked (Glc) serine glycan is attached at serine 2465. Positions aspartate 2485–isoleucine 2523 constitute an EGF-like 43; calcium-binding domain. One can recognise an EGF-like 44; calcium-binding domain in the interval aspartate 2524–glutamate 2566. Serine 2547 is a glycosylation site (O-linked (Glc) serine). An EGF-like 45; calcium-binding domain is found at aspartate 2567 to valine 2606. Residues aspartate 2607–glutamine 2647 enclose the EGF-like 46; calcium-binding domain. Residue serine 2628 is glycosylated (O-linked (Glc) serine). The EGF-like 47; calcium-binding domain maps to aspartate 2648–valine 2687. Residues serine 2702 and serine 2709 each carry the phosphoserine modification. 3 N-linked (GlcNAc...) asparagine glycosylation sites follow: asparagine 2734, asparagine 2750, and asparagine 2767.

This sequence belongs to the fibrillin family. As to quaternary structure, interacts with COL16A1. Interacts with integrin alpha-V/beta-3. Interacts with ADAMTS10; this interaction promotes microfibril assembly. Interacts with THSD4; this interaction promotes fibril formation. Interacts (via N-terminal domain) with FBLN2 and FBLN5. Interacts with ELN. Forms a ternary complex with ELN and FBLN2 or FBLN5 and a significant interaction with ELN seen only in the presence of FBLN2 or FBLN5. Interacts (via N-terminal domain) with LTBP2 (via C-terminal domain) in a Ca(+2)-dependent manner. Interacts (via N-terminal domain) with LTBP1 (via C-terminal domain). Interacts with integrins ITGA5:ITGB1, ITGAV:ITGB3 and ITGAV:ITGB6. Interacts (via N-terminal domain) with BMP2, BMP4, BMP7, BMP10 and GDF5. Interacts (via N-terminal domain) with MFAP2 and MFAP5. Interacts with ADAMTSL5. Interacts with MFAP4. Interacts (via N-terminal domain) with TNFSF11 in a Ca(+2)-dependent manner. Interacts (via N-terminal domain) with EFEMP2; this interaction inhibits EFEMP2 binding to LOX and ELN. Cleavage of N- and C-terminus by furin is required for incorporation into the extracellular matrix and assembly into microfibrils. The C-terminus, which corresponds to the Asprosin chain, was initially thought to constitute a propeptide. Fibrillin-1 and Asprosin chains are still linked together during the secretion from cells, but are subsequently separated by furin, an essential step for incorporation of Fibrillin-1 into the nascent microfibrils. In terms of processing, forms intermolecular disulfide bonds either with other fibrillin-1 molecules or with other components of the microfibrils. Post-translationally, O-glycosylated on serine residues by POGLUT2 and POGLUT3 which is necessary for efficient protein secretion.

The protein localises to the secreted. The protein resides in the extracellular space. It localises to the extracellular matrix. Structural component of the 10-12 nm diameter microfibrils of the extracellular matrix, which conveys both structural and regulatory properties to load-bearing connective tissues. Fibrillin-1-containing microfibrils provide long-term force bearing structural support. In tissues such as the lung, blood vessels and skin, microfibrils form the periphery of the elastic fiber, acting as a scaffold for the deposition of elastin. In addition, microfibrils can occur as elastin-independent networks in tissues such as the ciliary zonule, tendon, cornea and glomerulus where they provide tensile strength and have anchoring roles. Fibrillin-1 also plays a key role in tissue homeostasis through specific interactions with growth factors, such as the bone morphogenetic proteins (BMPs), growth and differentiation factors (GDFs) and latent transforming growth factor-beta-binding proteins (LTBPs), cell-surface integrins and other extracellular matrix protein and proteoglycan components. Regulates osteoblast maturation by controlling TGF-beta bioavailability and calibrating TGF-beta and BMP levels, respectively. Negatively regulates osteoclastogenesis by binding and sequestering an osteoclast differentiation and activation factor TNFSF11. This leads to disruption of TNFSF11-induced Ca(2+) signaling and impairment of TNFSF11-mediated nuclear translocation and activation of transcription factor NFATC1 which regulates genes important for osteoclast differentiation and function. Mediates cell adhesion via its binding to cell surface receptors integrins ITGAV:ITGB3 and ITGA5:ITGB1. Binds heparin and this interaction plays an important role in the assembly of microfibrils. Functionally, hormone that targets the liver to increase plasma glucose levels. Secreted by white adipose tissue and circulates in the plasma. Acts in response to fasting and promotes blood glucose elevation by binding to the surface of hepatocytes. Promotes hepatocyte glucose release by activating the protein kinase A activity in the liver, resulting in rapid glucose release into the circulation. The protein is Fibrillin-1 of Bos taurus (Bovine).